The following is a 327-amino-acid chain: 7,8-didemethyl-8-hydroxy-5-deazariboflavin synthase (327 aa).

The region spanning 6-244 (ITFSRNVFLP…EEVAVQVAPN (239 aa)) is the Radical SAM core domain. [4Fe-4S] cluster-binding residues include cysteine 20, cysteine 24, and cysteine 27.

Belongs to the radical SAM superfamily. CofG family. Consists of two subunits, CofG and CofH. The cofactor is [4Fe-4S] cluster.

The enzyme catalyses 5-amino-5-(4-hydroxybenzyl)-6-(D-ribitylimino)-5,6-dihydrouracil + S-adenosyl-L-methionine = 7,8-didemethyl-8-hydroxy-5-deazariboflavin + 5'-deoxyadenosine + L-methionine + NH4(+) + H(+). The protein operates within cofactor biosynthesis; coenzyme F0 biosynthesis. Its function is as follows. Catalyzes the radical-mediated synthesis of 7,8-didemethyl-8-hydroxy-5-deazariboflavin from 5-amino-5-(4-hydroxybenzyl)-6-(D-ribitylimino)-5,6-dihydrouracil. In Methanosphaerula palustris (strain ATCC BAA-1556 / DSM 19958 / E1-9c), this protein is 7,8-didemethyl-8-hydroxy-5-deazariboflavin synthase.